Here is a 1019-residue protein sequence, read N- to C-terminus: Exportin-T (1019 aa).

The protein belongs to the exportin family.

It localises to the nucleus. The protein localises to the cytoplasm. In terms of biological role, tRNA nucleus export receptor which facilitates tRNA translocation across the nuclear pore complex. Involved in pre-tRNA splicing, probably by affecting the interaction of pre-tRNA with splicing endonuclease. The chain is Exportin-T (LOS1) from Chaetomium globosum (strain ATCC 6205 / CBS 148.51 / DSM 1962 / NBRC 6347 / NRRL 1970) (Soil fungus).